A 658-amino-acid chain; its full sequence is Serine/threonine-protein kinase shk1/pak1 (658 aa).

4 disordered regions span residues 1 to 21 (MERGTLQPRKKAPNGYGITPI), 39 to 104 (RKLK…SYDE), 126 to 147 (GGSSPTSSYGSGSASPRKSTVI), and 213 to 365 (GAKP…QQSN). The span at 66-98 (PLSQSRTTVSRVSLGSRQHSSSSIRKLQTNVSD) shows a compositional bias: polar residues. The segment covering 129–140 (SPTSSYGSGSAS) has biased composition (low complexity). The region spanning 147 to 160 (ISSPFDPKHVTHVG) is the CRIB domain. 2 stretches are compositionally biased toward low complexity: residues 226–254 (PLLSVSALSSSSHLQPTSATSSSSRLYPS) and 262–272 (ASSSSSPLLSS). Polar residues predominate over residues 273–300 (QTVKTTTSNASRQPSPLVSSKSTDNIIR). Phosphoserine is present on residues Ser301 and Ser303. The Protein kinase domain occupies 386–637 (YRNFVKIGQG…SGELLRHPFL (252 aa)). ATP is bound by residues 392–400 (IGQGASGDV) and Lys415. Residue Asp505 is the Proton acceptor of the active site.

Belongs to the protein kinase superfamily. STE Ser/Thr protein kinase family. STE20 subfamily. As to quaternary structure, forms an activated complex with GTP-bound ras-like cdc42. Interacts with skb1 and the SH3 domain of skb5 via its amino-terminal regulatory domain. Skb1, cdc42 and shk1 are able to form a ternary complex in vivo. Interacts with rga8 and may interact with byr2. Post-translationally, autophosphorylated on serine residues.

Its subcellular location is the cytoplasm. The protein localises to the cytoskeleton. The protein resides in the spindle. It catalyses the reaction L-seryl-[protein] + ATP = O-phospho-L-seryl-[protein] + ADP + H(+). The catalysed reaction is L-threonyl-[protein] + ATP = O-phospho-L-threonyl-[protein] + ADP + H(+). Functionally, MAP4K component of the MAPK pathway required for the mating pheromone response. Phosphorylates histone H2B to form H2BS10ph. Phosphorylates tea1. Required for skb1-dependent mitotic inhibitory function. Regulates microtubule dynamics and cell polarity. In Schizosaccharomyces pombe (strain 972 / ATCC 24843) (Fission yeast), this protein is Serine/threonine-protein kinase shk1/pak1 (shk1).